A 142-amino-acid polypeptide reads, in one-letter code: Large ribosomal subunit protein uL13c (142 aa).

It belongs to the universal ribosomal protein uL13 family. In terms of assembly, part of the 50S ribosomal subunit.

It is found in the plastid. The protein resides in the chloroplast. In Pyropia yezoensis (Susabi-nori), this protein is Large ribosomal subunit protein uL13c.